We begin with the raw amino-acid sequence, 223 residues long: Deoxyribose-phosphate aldolase (223 aa).

Asp89 acts as the Proton donor/acceptor in catalysis. The active-site Schiff-base intermediate with acetaldehyde is the Lys152. The Proton donor/acceptor role is filled by Lys181.

This sequence belongs to the DeoC/FbaB aldolase family. DeoC type 1 subfamily.

The protein resides in the cytoplasm. It carries out the reaction 2-deoxy-D-ribose 5-phosphate = D-glyceraldehyde 3-phosphate + acetaldehyde. It functions in the pathway carbohydrate degradation; 2-deoxy-D-ribose 1-phosphate degradation; D-glyceraldehyde 3-phosphate and acetaldehyde from 2-deoxy-alpha-D-ribose 1-phosphate: step 2/2. In terms of biological role, catalyzes a reversible aldol reaction between acetaldehyde and D-glyceraldehyde 3-phosphate to generate 2-deoxy-D-ribose 5-phosphate. The protein is Deoxyribose-phosphate aldolase of Bacillus cytotoxicus (strain DSM 22905 / CIP 110041 / 391-98 / NVH 391-98).